Here is a 302-residue protein sequence, read N- to C-terminus: Acetaldehyde dehydrogenase 1 (302 aa).

12 to 15 (SGNI) contacts NAD(+). C127 serves as the catalytic Acyl-thioester intermediate. NAD(+)-binding positions include 158 to 166 (SAGPGTRAN) and N277.

This sequence belongs to the acetaldehyde dehydrogenase family.

The enzyme catalyses acetaldehyde + NAD(+) + CoA = acetyl-CoA + NADH + H(+). In Mycobacteroides abscessus (strain ATCC 19977 / DSM 44196 / CCUG 20993 / CIP 104536 / JCM 13569 / NCTC 13031 / TMC 1543 / L948) (Mycobacterium abscessus), this protein is Acetaldehyde dehydrogenase 1.